The sequence spans 881 residues: Tyrosine-protein kinase receptor TYRO3 (881 aa).

The first 28 residues, 1-28 (MVNPGPPGLIAGLLLAALSLSSVDGTKA), serve as a signal peptide directing secretion. Ig-like C2-type domains lie at 29–114 (LGFV…KSVS) and 125–206 (PYFT…AIVE). The Extracellular segment spans residues 29–414 (LGFVGHGYNM…QRHPHTRMSW (386 aa)). Asn37 and Asn49 each carry an N-linked (GlcNAc...) asparagine glycan. Cys50 and Cys103 are joined by a disulfide. N-linked (GlcNAc...) asparagine glycosylation occurs at Asn143. Cys146 and Cys189 are disulfide-bonded. Fibronectin type-III domains are found at residues 213–306 (PPFN…TKEK) and 311–401 (IPQN…SKEE). N-linked (GlcNAc...) asparagine glycans are attached at residues Asn216, Asn279, Asn351, and Asn365. A helical membrane pass occupies residues 415-435 (VPMVLGILTALVTVVAMTLIF). Residues 436–881 (LRKGRKETRF…MQEEQVVITL (446 aa)) lie on the Cytoplasmic side of the membrane. Residues 503-774 (FTLGRTLGKG…VDLKRRLEAI (272 aa)) enclose the Protein kinase domain. ATP is bound by residues 509–517 (LGKGEFGSV) and Lys535. Catalysis depends on Asp640, which acts as the Proton acceptor. Position 671 is a phosphotyrosine; by autocatalysis (Tyr671). A disordered region spans residues 846–881 (EWSSSAQNGEARGLLHEEEEEEEEEEMQEEQVVITL). Residues 862 to 874 (EEEEEEEEEEMQE) are compositionally biased toward acidic residues.

It belongs to the protein kinase superfamily. Tyr protein kinase family. AXL/UFO subfamily. Post-translationally, tyrosine phosphorylated upon receptor stimulation.

It localises to the cell membrane. The catalysed reaction is L-tyrosyl-[protein] + ATP = O-phospho-L-tyrosyl-[protein] + ADP + H(+). Functionally, may be involved in cell adhesion processes, particularly in the central nervous system. In Xenopus tropicalis (Western clawed frog), this protein is Tyrosine-protein kinase receptor TYRO3 (tyro3).